The sequence spans 899 residues: Probable disease resistance protein RXW24L (899 aa).

The stretch at 13–50 forms a coiled coil; it reads DRLSQEYDQFKGVEDQVTELKSNLNLLKSFLKDADAKK. One can recognise an NB-ARC domain in the interval 143–455; that stretch reads LQERQREMRH…AEGISERRRY (313 aa). 189–196 provides a ligand contact to ATP; it reads GMGGLGKT.

The protein belongs to the disease resistance NB-LRR family.

Functionally, potential disease resistance protein. This Arabidopsis thaliana (Mouse-ear cress) protein is Probable disease resistance protein RXW24L (RXW24L).